Here is a 174-residue protein sequence, read N- to C-terminus: uncharacterized protein (174 aa).

Belongs to the gamma-class carbonic anhydrase family.

This is an uncharacterized protein from Pseudomonas aeruginosa (strain ATCC 15692 / DSM 22644 / CIP 104116 / JCM 14847 / LMG 12228 / 1C / PRS 101 / PAO1).